A 318-amino-acid polypeptide reads, in one-letter code: uncharacterized protein (318 aa).

The disordered stretch occupies residues 19–63 (VPPDARHHEPRPGMTDHPDTGNGIGLTGRPPRAIPDPAPRSSHGP). Positions 21 to 37 (PDARHHEPRPGMTDHPD) are enriched in basic and acidic residues. 72 to 79 (QKGGVGKT) contributes to the ATP binding site.

It belongs to the ParA family.

Functionally, may play a role in septum formation. This is an uncharacterized protein from Mycobacterium tuberculosis (strain CDC 1551 / Oshkosh).